Here is a 310-residue protein sequence, read N- to C-terminus: MTASVAAAPDPAGLDPELAHIAPALKAEILAQALPYIRKFHGKTIVIKYGGNAMTEEKLKHGFARDVILLKLVGMNPVVVHGGGPQIDDALKKVGKTGTFIQGMRVTDEETMEVVEWVLGGEVQQDIVMLINQYGGQAVGLTGKDGGLIRAKKLKMPDREQPGQFIDIGFVGDIETINPAVVRALQDDAFIPVISPIGFSDDGQAYNINADVVAGKMAEILKAEKLVMMTNIPGVMDKQGNLLTDLSAREIDELFADGTISGGMLPKISSALDAAKSGVNSVHIIDGRIEHSLLLEILTEQAFGTMIRSH.

Residues 83–84 (GG), R105, and N207 each bind substrate.

It belongs to the acetylglutamate kinase family. ArgB subfamily.

Its subcellular location is the cytoplasm. It catalyses the reaction N-acetyl-L-glutamate + ATP = N-acetyl-L-glutamyl 5-phosphate + ADP. Its pathway is amino-acid biosynthesis; L-arginine biosynthesis; N(2)-acetyl-L-ornithine from L-glutamate: step 2/4. In terms of biological role, catalyzes the ATP-dependent phosphorylation of N-acetyl-L-glutamate. The polypeptide is Acetylglutamate kinase (Ralstonia nicotianae (strain ATCC BAA-1114 / GMI1000) (Ralstonia solanacearum)).